A 98-amino-acid polypeptide reads, in one-letter code: NADH-ubiquinone oxidoreductase chain 4L (98 aa).

The next 3 membrane-spanning stretches (helical) occupy residues 1–21, 29–49, and 61–81; these read MSMV…GLLM, SLLC…LTIL, and IILL…LVMV.

The protein belongs to the complex I subunit 4L family. In terms of assembly, core subunit of respiratory chain NADH dehydrogenase (Complex I) which is composed of 45 different subunits.

The protein resides in the mitochondrion inner membrane. The catalysed reaction is a ubiquinone + NADH + 5 H(+)(in) = a ubiquinol + NAD(+) + 4 H(+)(out). Core subunit of the mitochondrial membrane respiratory chain NADH dehydrogenase (Complex I) which catalyzes electron transfer from NADH through the respiratory chain, using ubiquinone as an electron acceptor. Part of the enzyme membrane arm which is embedded in the lipid bilayer and involved in proton translocation. The chain is NADH-ubiquinone oxidoreductase chain 4L (MT-ND4L) from Bos mutus grunniens (Wild yak).